The primary structure comprises 339 residues: Ketol-acid reductoisomerase (NADP(+)) (339 aa).

The region spanning 1–182 (MRVYYDRDAD…GGGRAGIIET (182 aa)) is the KARI N-terminal Rossmann domain. NADP(+)-binding positions include 24–27 (YGSQ), arginine 48, serine 51, threonine 53, and 83–86 (DELQ). The active site involves histidine 108. Position 134 (glycine 134) interacts with NADP(+). A KARI C-terminal knotted domain is found at 183 to 328 (TFKEECETDL…AKLRGMMPWI (146 aa)). The Mg(2+) site is built by aspartate 191, glutamate 195, glutamate 227, and glutamate 231. Residue serine 252 participates in substrate binding.

The protein belongs to the ketol-acid reductoisomerase family. The cofactor is Mg(2+).

The catalysed reaction is (2R)-2,3-dihydroxy-3-methylbutanoate + NADP(+) = (2S)-2-acetolactate + NADPH + H(+). It catalyses the reaction (2R,3R)-2,3-dihydroxy-3-methylpentanoate + NADP(+) = (S)-2-ethyl-2-hydroxy-3-oxobutanoate + NADPH + H(+). Its pathway is amino-acid biosynthesis; L-isoleucine biosynthesis; L-isoleucine from 2-oxobutanoate: step 2/4. It participates in amino-acid biosynthesis; L-valine biosynthesis; L-valine from pyruvate: step 2/4. Its function is as follows. Involved in the biosynthesis of branched-chain amino acids (BCAA). Catalyzes an alkyl-migration followed by a ketol-acid reduction of (S)-2-acetolactate (S2AL) to yield (R)-2,3-dihydroxy-isovalerate. In the isomerase reaction, S2AL is rearranged via a Mg-dependent methyl migration to produce 3-hydroxy-3-methyl-2-ketobutyrate (HMKB). In the reductase reaction, this 2-ketoacid undergoes a metal-dependent reduction by NADPH to yield (R)-2,3-dihydroxy-isovalerate. This chain is Ketol-acid reductoisomerase (NADP(+)), found in Methylobacterium radiotolerans (strain ATCC 27329 / DSM 1819 / JCM 2831 / NBRC 15690 / NCIMB 10815 / 0-1).